A 74-amino-acid polypeptide reads, in one-letter code: ATP synthase subunit c (74 aa).

Helical transmembrane passes span 9 to 29 (IAIAFMAFGMAGAALGVASIF) and 51 to 71 (LIGAGLAEAMGLFSFILAILL).

This sequence belongs to the ATPase C chain family. In terms of assembly, F-type ATPases have 2 components, F(1) - the catalytic core - and F(0) - the membrane proton channel. F(1) has five subunits: alpha(3), beta(3), gamma(1), delta(1), epsilon(1). F(0) has three main subunits: a(1), b(2) and c(10-14). The alpha and beta chains form an alternating ring which encloses part of the gamma chain. F(1) is attached to F(0) by a central stalk formed by the gamma and epsilon chains, while a peripheral stalk is formed by the delta and b chains.

The protein localises to the cell inner membrane. Functionally, f(1)F(0) ATP synthase produces ATP from ADP in the presence of a proton or sodium gradient. F-type ATPases consist of two structural domains, F(1) containing the extramembraneous catalytic core and F(0) containing the membrane proton channel, linked together by a central stalk and a peripheral stalk. During catalysis, ATP synthesis in the catalytic domain of F(1) is coupled via a rotary mechanism of the central stalk subunits to proton translocation. In terms of biological role, key component of the F(0) channel; it plays a direct role in translocation across the membrane. A homomeric c-ring of between 10-14 subunits forms the central stalk rotor element with the F(1) delta and epsilon subunits. In Orientia tsutsugamushi (strain Ikeda) (Rickettsia tsutsugamushi), this protein is ATP synthase subunit c.